The following is a 340-amino-acid chain: uncharacterized protein (340 aa).

2 helical membrane passes run 162–182 (PLVPLVAGPLPVAFFIGVLAG) and 239–259 (FWISLYFPLTMRSLCNAIVVP).

It is found in the cell membrane. This is an uncharacterized protein from Mycobacterium bovis (strain ATCC BAA-935 / AF2122/97).